Reading from the N-terminus, the 447-residue chain is Phosphoglucosamine mutase (447 aa).

Serine 106 (phosphoserine intermediate) is an active-site residue. Positions 106, 245, 247, and 249 each coordinate Mg(2+). Position 106 is a phosphoserine (serine 106).

This sequence belongs to the phosphohexose mutase family. Mg(2+) serves as cofactor. Post-translationally, activated by phosphorylation.

The catalysed reaction is alpha-D-glucosamine 1-phosphate = D-glucosamine 6-phosphate. Functionally, catalyzes the conversion of glucosamine-6-phosphate to glucosamine-1-phosphate. This Cupriavidus pinatubonensis (strain JMP 134 / LMG 1197) (Cupriavidus necator (strain JMP 134)) protein is Phosphoglucosamine mutase.